We begin with the raw amino-acid sequence, 551 residues long: MDRRRFIKGSMAMAAVCGTSGIASLFSQAAFAADPDIADGQTQRFDFSILQSMAHDLAQTAWRGAPRPLPDTLATMTPQAYNSIQYDAEKSLWHNVENRQLDAQFFHMGMGFRRRVRMFSVDPATHLAREIHFRPELFKYNDAGVDTKQLEGQSDLGFAGFRVFKAPELARRDVVSFLGASYFRAVDDTYQYGLSARGLAIDTYTDSKEEFPDFTAFWFDTVKPGATTFTVYALLDSASITGAYKFTIHCEKSQVIMDVENHLYARKDIKQLGIAPMTSMFSCGTNERRMCDAIHPQIHDSDRLSMWRGNGEWICRPLNNPQKLQFNAYTDNNPKGFGLLQLDRDFSHYQDIMGWYNKRPSLWVEPRNKWGKGTIGLMEIPTTGETLDNIVCFWQPEKAVKAGDEFAFQYRLYWSAQPPVHCPLARVMATRTGMGGFPEGWAPGEHYPEKWARRFAVDFVGGDLKAAAPKGIEPVITLSSGEAKQIEILYIEPIDGYRIQFDWYPTSDSTDPVDMRMYLRCQGDAISETWLYQYFPPAPDKRQYVDDRVMS.

Positions 1-32 form a signal peptide, tat-type signal; it reads MDRRRFIKGSMAMAAVCGTSGIASLFSQAAFA.

It belongs to the OpgD/OpgG family. In terms of processing, predicted to be exported by the Tat system. The position of the signal peptide cleavage has not been experimentally proven.

The protein localises to the periplasm. It functions in the pathway glycan metabolism; osmoregulated periplasmic glucan (OPG) biosynthesis. Probably involved in the control of the structural glucose backbone of osmoregulated periplasmic glucans (OPGs). The sequence is that of Glucans biosynthesis protein D from Shigella dysenteriae serotype 1 (strain Sd197).